The primary structure comprises 132 residues: Large ribosomal subunit protein bL17 (132 aa).

This sequence belongs to the bacterial ribosomal protein bL17 family. In terms of assembly, part of the 50S ribosomal subunit. Contacts protein L32.

This chain is Large ribosomal subunit protein bL17, found in Anaplasma phagocytophilum (strain HZ).